A 193-amino-acid chain; its full sequence is Flagellar transcriptional regulator FlhC (193 aa).

Zn(2+)-binding residues include Cys-137, Cys-140, Cys-158, and Cys-161.

Belongs to the FlhC family. In terms of assembly, heterohexamer composed of two FlhC and four FlhD subunits. Each FlhC binds a FlhD dimer, forming a heterotrimer, and a hexamer assembles by dimerization of two heterotrimers. The cofactor is Zn(2+).

It is found in the cytoplasm. Functions in complex with FlhD as a master transcriptional regulator that regulates transcription of several flagellar and non-flagellar operons by binding to their promoter region. Activates expression of class 2 flagellar genes, including fliA, which is a flagellum-specific sigma factor that turns on the class 3 genes. Also regulates genes whose products function in a variety of physiological pathways. The protein is Flagellar transcriptional regulator FlhC of Pectobacterium carotovorum (Erwinia carotovora).